Consider the following 355-residue polypeptide: Uroporphyrinogen decarboxylase (355 aa).

Substrate-binding positions include 27 to 31, Asp78, Tyr155, Ser210, and His328; that span reads RQAGR.

The protein belongs to the uroporphyrinogen decarboxylase family. Homodimer.

The protein resides in the cytoplasm. It carries out the reaction uroporphyrinogen III + 4 H(+) = coproporphyrinogen III + 4 CO2. Its pathway is porphyrin-containing compound metabolism; protoporphyrin-IX biosynthesis; coproporphyrinogen-III from 5-aminolevulinate: step 4/4. Catalyzes the decarboxylation of four acetate groups of uroporphyrinogen-III to yield coproporphyrinogen-III. This is Uroporphyrinogen decarboxylase from Ectopseudomonas mendocina (strain ymp) (Pseudomonas mendocina).